A 61-amino-acid chain; its full sequence is Large ribosomal subunit protein uL30 (61 aa).

Belongs to the universal ribosomal protein uL30 family. Part of the 50S ribosomal subunit.

This Methylococcus capsulatus (strain ATCC 33009 / NCIMB 11132 / Bath) protein is Large ribosomal subunit protein uL30.